The sequence spans 680 residues: Lipase 1 (680 aa).

The N-terminal stretch at 1 to 34 (MKSQNKYSIRKFSVGASSILIATLLFLSGGQAQA) is a signal peptide. A propeptide spanning residues 35-290 (AEKQVNMGNS…AKAKDDQTNK (256 aa)) is cleaved from the precursor. The segment at 82–259 (KNLHNDKTIS…PTKDNDKKNG (178 aa)) is disordered. Basic and acidic residues predominate over residues 84–111 (LHNDKTISEENHRKTDDLNKDQLKDDKN). Polar residues-rich tracts occupy residues 125–138 (KNNN…NQGL), 162–193 (SQDS…SQRE), and 204–223 (QPQQ…FNNE). Residues 224–234 (QEVKPQKDEKT) show a composition bias toward basic and acidic residues. The span at 235–246 (LSVSDLKNNQKS) shows a compositional bias: polar residues. The active-site Nucleophile is the S408. The active-site Charge relay system is the D600. D638 is a Ca(2+) binding site. The Charge relay system role is filled by H639. Ca(2+) is bound by residues D641, D646, and D649.

This sequence belongs to the AB hydrolase superfamily. Lipase family.

The protein localises to the secreted. It carries out the reaction a triacylglycerol + H2O = a diacylglycerol + a fatty acid + H(+). This chain is Lipase 1 (lip1), found in Staphylococcus aureus (strain Mu50 / ATCC 700699).